Here is a 742-residue protein sequence, read N- to C-terminus: Phosphoribosylformylglycinamidine synthase subunit PurL (742 aa).

The active site involves H54. Residues Y57 and K96 each contribute to the ATP site. E98 lines the Mg(2+) pocket. Substrate contacts are provided by residues 99 to 102 and R121; that span reads SHNH. Residue H100 is the Proton acceptor of the active site. Residue D122 coordinates Mg(2+). Substrate is bound at residue Q245. Position 273 (D273) interacts with Mg(2+). 317–319 serves as a coordination point for substrate; it reads ESQ. D500 and G537 together coordinate ATP. N538 is a Mg(2+) binding site. S540 contacts substrate.

This sequence belongs to the FGAMS family. As to quaternary structure, monomer. Part of the FGAM synthase complex composed of 1 PurL, 1 PurQ and 2 PurS subunits.

The protein resides in the cytoplasm. The enzyme catalyses N(2)-formyl-N(1)-(5-phospho-beta-D-ribosyl)glycinamide + L-glutamine + ATP + H2O = 2-formamido-N(1)-(5-O-phospho-beta-D-ribosyl)acetamidine + L-glutamate + ADP + phosphate + H(+). Its pathway is purine metabolism; IMP biosynthesis via de novo pathway; 5-amino-1-(5-phospho-D-ribosyl)imidazole from N(2)-formyl-N(1)-(5-phospho-D-ribosyl)glycinamide: step 1/2. Part of the phosphoribosylformylglycinamidine synthase complex involved in the purines biosynthetic pathway. Catalyzes the ATP-dependent conversion of formylglycinamide ribonucleotide (FGAR) and glutamine to yield formylglycinamidine ribonucleotide (FGAM) and glutamate. The FGAM synthase complex is composed of three subunits. PurQ produces an ammonia molecule by converting glutamine to glutamate. PurL transfers the ammonia molecule to FGAR to form FGAM in an ATP-dependent manner. PurS interacts with PurQ and PurL and is thought to assist in the transfer of the ammonia molecule from PurQ to PurL. In Geobacillus thermodenitrificans (strain NG80-2), this protein is Phosphoribosylformylglycinamidine synthase subunit PurL.